A 138-amino-acid chain; its full sequence is Small ribosomal subunit protein uS11c (138 aa).

The tract at residues 1–22 is disordered; the sequence is MAKPILRVGSRKNTRSASRKNV. A compositionally biased stretch (basic residues) spans 9–22; that stretch reads GSRKNTRSASRKNV.

The protein belongs to the universal ribosomal protein uS11 family. Part of the 30S ribosomal subunit.

Its subcellular location is the plastid. It is found in the chloroplast. The protein is Small ribosomal subunit protein uS11c of Draba nemorosa (Woodland whitlowgrass).